A 59-amino-acid chain; its full sequence is Membrane-associated ATPase epsilon chain (59 aa).

It to E.hirae NtpH. In terms of assembly, sul-ATPase is composed of six (or maybe five) subunits: alpha, beta, delta, gamma, C (proteolipid), and possibly epsilon.

The enzyme catalyses ATP + H2O + 4 H(+)(in) = ADP + phosphate + 5 H(+)(out). In Sulfurisphaera tokodaii (strain DSM 16993 / JCM 10545 / NBRC 100140 / 7) (Sulfolobus tokodaii), this protein is Membrane-associated ATPase epsilon chain (atpE).